A 768-amino-acid polypeptide reads, in one-letter code: MTDTSHKKEGFKKCRSATFSIDGYSFTIVANEAGDKNARPLARFSRSKSQNCLWNSLIDGLTGNVKEKPRPTIVQDTRPPEEILADELPQLDSPEALVKTSFRLRSLVKQLERGEASVVDLKKNLEYAATVLESVYIDETRRLLDTEDELSDIQSDAVPSEVRDWLASTFTRQMGMMLRRSDEKPRFKSIVHAVQAGIFVERMYRRTSNMVGLSYPPAVIDALKDVDTWSFDVFSLNEASGDHALKFIFYELLTRYDLISRFKIPISALVSFVEALEVGYSKHKNPYHNLMHAADVTQTVHYLLYKTGVANWLTELEIFAIIFSAAIHDYEHTGTTNNFHIQTRSDPAILYNDRSVLENHHLSAAYRLLQEDEEMNILVNLSKDDWREFRTLVIEMVMATDMSCHFQQIKAMKTALQQPEAIEKPKALSLMLHTADISHPAKAWDLHHRWTMSLLEEFFRQGDREAELGLPFSPLCDRKSTMVAQSQVGFIDFIVEPTFTVLTDMTEKIVSPLIDETSQTGGTGQRRSSLNSINSSDAKRSGVKSSGSEGSAPINNSVIPVDYKSFKATWTEVVQINRERWRAKVPKEEKAKKEAEEKARLAAEEKQKEMEAKSQAEQGTTSKAEKKTSGETKGQVNGTRTSKGDNPRGKNSKGDKAGEKQQNGDLKDGKNKADKKDHSNTGNESKKADGTKKRSHGSPAPSTSSTSRLTLPVIKPPLRHFKRPAYASSSYAPSVPKKTDDHPVRYKMLDQRIKIKKIQNISHHWNKK.

Methionine 1 bears the N-acetylmethionine mark. A calmodulin-binding region spans residues glutamate 183–arginine 206. Positions valine 211–glutamate 588 constitute a PDEase domain. The active-site Proton donor is histidine 288. Zn(2+) contacts are provided by histidine 292, histidine 328, aspartate 329, and aspartate 436. Aspartate 329 provides a ligand contact to Mg(2+). Disordered stretches follow at residues leucine 513–serine 557 and lysine 584–arginine 719. Composition is skewed to polar residues over residues glutamate 516–serine 536 and valine 543–serine 557. The span at lysine 584–serine 614 shows a compositional bias: basic and acidic residues. Over residues glutamate 631–threonine 641 the composition is skewed to polar residues. Basic and acidic residues-rich tracts occupy residues serine 642–glutamate 659 and aspartate 665–lysine 692. The segment covering serine 698–proline 712 has biased composition (low complexity).

It belongs to the cyclic nucleotide phosphodiesterase family. PDE1 subfamily. In terms of assembly, homodimer. Requires Zn(2+) as cofactor. Mg(2+) serves as cofactor. In terms of tissue distribution, highly expressed in olfactory epithelium and at moderate levels, in cerebellum, as well as weakly in forebrain, testis, heart and lung. In the olfactory epithelium, expressed by sensory neurons, but not epithelial cells.

The protein resides in the lysosome. The catalysed reaction is a nucleoside 3',5'-cyclic phosphate + H2O = a nucleoside 5'-phosphate + H(+). It carries out the reaction 3',5'-cyclic GMP + H2O = GMP + H(+). The enzyme catalyses 3',5'-cyclic AMP + H2O = AMP + H(+). With respect to regulation, type I PDE are activated by the binding of calmodulin in the presence of Ca(2+). Calmodulin-dependent cyclic nucleotide phosphodiesterase with a dual specificity for the second messengers cAMP and cGMP, which are key regulators of many important physiological processes. Has a high affinity for both cAMP and cGMP. Modulates the amplitude and duration of the cAMP signal in sensory cilia in response to odorant stimulation, hence contributing to the generation of action potentials. Regulates smooth muscle cell proliferation. Regulates the stability of growth factor receptors, including PDGFRB. In Rattus norvegicus (Rat), this protein is Dual specificity calcium/calmodulin-dependent 3',5'-cyclic nucleotide phosphodiesterase 1C.